A 426-amino-acid chain; its full sequence is D-tagatose-1,6-bisphosphate aldolase subunit KbaZ (426 aa).

The protein belongs to the GatZ/KbaZ family. KbaZ subfamily. Forms a complex with KbaY.

It participates in carbohydrate metabolism; D-tagatose 6-phosphate degradation; D-glyceraldehyde 3-phosphate and glycerone phosphate from D-tagatose 6-phosphate: step 2/2. Component of the tagatose-1,6-bisphosphate aldolase KbaYZ that is required for full activity and stability of the Y subunit. Could have a chaperone-like function for the proper and stable folding of KbaY. When expressed alone, KbaZ does not show any aldolase activity. This chain is D-tagatose-1,6-bisphosphate aldolase subunit KbaZ, found in Escherichia coli O139:H28 (strain E24377A / ETEC).